Reading from the N-terminus, the 323-residue chain is Calcium homeostasis modulator protein 2 (323 aa).

Residues 1–21 (MAALIAENFRFLSLFFKSKDV) lie on the Cytoplasmic side of the membrane. Positions 14 to 39 (LFFKSKDVMIFNGLVALGTVGSQELF) are central pore. Residues 22-43 (MIFNGLVALGTVGSQELFTVVA) form a helical membrane-spanning segment. Topologically, residues 44–52 (FHCPCSPAR) are extracellular. Disulfide bonds link Cys-46–Cys-130 and Cys-48–Cys-162. Residues 53-76 (NYLYGLAAIGVPALALFLIGVILN) form a helical membrane-spanning segment. The Cytoplasmic segment spans residues 77-101 (NHTWNLVAECQYRRTKNCSAAPNFL). The helical transmembrane segment at 102–132 (LLSSIVGRAAVAPVTWSVISLLRGEAYVCAL) threads the bilayer. Residues 133-179 (SEFVNPHSLMVGERSFPVAHATEILARFPCGEGPANLSVFREEVSRR) lie on the Extracellular side of the membrane. Residues 145-152 (ERSFPVAH) are hemichannel docking. A helical membrane pass occupies residues 180–206 (LKYESQLFGWLLIGVVAILVFLTKCLK). The Cytoplasmic portion of the chain corresponds to 207–323 (HYCSPLSYRQ…DHVEMSLLPS (117 aa)). The intersubunit interaction stretch occupies residues 214–251 (YRQEAYWAQYRANEDQLFQRTAEVHSRVLAANNVRRFF).

This sequence belongs to the CALHM family. As to quaternary structure, homo-undecamer. Two undecameric hemichannels can assemble in a head-to-head manner to form a gap junction.

Its subcellular location is the cell membrane. The enzyme catalyses ATP(in) = ATP(out). Functionally, pore-forming subunit of Ca(2+) homeostasis modulator channels. Mediates ATP release from astrocytes and ATP-induced Ca(2+) influx in microglia thus regulating neuronal ATP and Ca(2+) homeostasis, synaptic transmission and neuroinflammatory response. May form intercellular gap junctions. The gating mechanism remains unknown. In Bos taurus (Bovine), this protein is Calcium homeostasis modulator protein 2 (CALHM2).